A 126-amino-acid chain; its full sequence is Large ribosomal subunit protein bL12 (126 aa).

It belongs to the bacterial ribosomal protein bL12 family. In terms of assembly, homodimer. Part of the ribosomal stalk of the 50S ribosomal subunit. Forms a multimeric L10(L12)X complex, where L10 forms an elongated spine to which 2 to 4 L12 dimers bind in a sequential fashion. Binds GTP-bound translation factors.

Its function is as follows. Forms part of the ribosomal stalk which helps the ribosome interact with GTP-bound translation factors. Is thus essential for accurate translation. This chain is Large ribosomal subunit protein bL12, found in Rhizorhabdus wittichii (strain DSM 6014 / CCUG 31198 / JCM 15750 / NBRC 105917 / EY 4224 / RW1) (Sphingomonas wittichii).